We begin with the raw amino-acid sequence, 214 residues long: MNYPHPIIAREGWPFIAIAAVIALLIHAIGGFGFAWPFWLLLVFVVQFFRDPQRPIPAQPNAVLCPADGRIVAVETSHDPYANREALKISVFMNVFNVHSQRSPVDGAISKVEYFPGAFLNAAIDKASTENERNAVVIQTASGKTVTAVQIAGLIARRILCYVRAGEPLSRGQRYGFIRFGSRVDVYLPLGSRAKVSIGEKVYASSTILAELEQ.

The active-site Schiff-base intermediate with substrate; via pyruvic acid is serine 182. Position 182 is a pyruvic acid (Ser); by autocatalysis (serine 182).

It belongs to the phosphatidylserine decarboxylase family. PSD-A subfamily. As to quaternary structure, heterodimer of a large membrane-associated beta subunit and a small pyruvoyl-containing alpha subunit. Pyruvate serves as cofactor. Post-translationally, is synthesized initially as an inactive proenzyme. Formation of the active enzyme involves a self-maturation process in which the active site pyruvoyl group is generated from an internal serine residue via an autocatalytic post-translational modification. Two non-identical subunits are generated from the proenzyme in this reaction, and the pyruvate is formed at the N-terminus of the alpha chain, which is derived from the carboxyl end of the proenzyme. The post-translation cleavage follows an unusual pathway, termed non-hydrolytic serinolysis, in which the side chain hydroxyl group of the serine supplies its oxygen atom to form the C-terminus of the beta chain, while the remainder of the serine residue undergoes an oxidative deamination to produce ammonia and the pyruvoyl prosthetic group on the alpha chain.

It localises to the cell membrane. It carries out the reaction a 1,2-diacyl-sn-glycero-3-phospho-L-serine + H(+) = a 1,2-diacyl-sn-glycero-3-phosphoethanolamine + CO2. Its pathway is phospholipid metabolism; phosphatidylethanolamine biosynthesis; phosphatidylethanolamine from CDP-diacylglycerol: step 2/2. Functionally, catalyzes the formation of phosphatidylethanolamine (PtdEtn) from phosphatidylserine (PtdSer). The protein is Phosphatidylserine decarboxylase proenzyme of Burkholderia vietnamiensis (strain G4 / LMG 22486) (Burkholderia cepacia (strain R1808)).